Here is a 182-residue protein sequence, read N- to C-terminus: ADP-ribosylation factor 1 (182 aa).

The N-myristoyl glycine moiety is linked to residue G2. GTP-binding positions include 24–31, 67–71, and 126–129; these read GLDAAGKT, DVGGQ, and NKQD.

It belongs to the small GTPase superfamily. Arf family.

Its subcellular location is the golgi apparatus. The enzyme catalyses GTP + H2O = GDP + phosphate + H(+). GTP-binding protein involved in protein trafficking; may modulate vesicle budding and uncoating within the Golgi apparatus. The polypeptide is ADP-ribosylation factor 1 (arfA) (Dictyostelium discoideum (Social amoeba)).